The primary structure comprises 182 residues: Inner membrane assembly complex subunit 17 (182 aa).

The N-terminal 45 residues, 1–45 (MLKRRSNALITLSRTKLFPITTVAYYHRRLLNQQRRAVSTSPKKE), are a transit peptide targeting the mitochondrion. Topologically, residues 46 to 107 (IKSLEDLANL…EIPVKRFIRP (62 aa)) are mitochondrial matrix. A helical transmembrane segment spans residues 108 to 127 (LWMFILMGSSVYLLLHFSWW). A coiled-coil region spans residues 128 to 158 (KLEHEERESQLKKEVEILEHQLNELIVQDKT). At 128 to 182 (KLEHEERESQLKKEVEILEHQLNELIVQDKTHNTSRGKGSNESTHMKPWYRRWFW) the chain is on the mitochondrial intermembrane side.

This sequence belongs to the INA17 family. As to quaternary structure, component of the inner membrane assembly (INA) complex, composed of INA17 and INA22. Interacts with a subset of F(1)F(0)-ATP synthase subunits of the F(1)-domain and the peripheral stalk.

Its subcellular location is the mitochondrion inner membrane. In terms of biological role, component of the INA complex (INAC) that promotes the biogenesis of mitochondrial F(1)F(0)-ATP synthase. INAC facilitates the assembly of the peripheral stalk and promotes the assembly of the catalytic F(1)-domain with the membrane-embedded F(0)-domain. In Saccharomyces cerevisiae (strain RM11-1a) (Baker's yeast), this protein is Inner membrane assembly complex subunit 17.